The chain runs to 564 residues: Arginine--tRNA ligase (564 aa).

The short motif at 130-140 (ANPTGSLHIGH) is the 'HIGH' region element.

This sequence belongs to the class-I aminoacyl-tRNA synthetase family. As to quaternary structure, monomer.

The protein localises to the cytoplasm. The catalysed reaction is tRNA(Arg) + L-arginine + ATP = L-arginyl-tRNA(Arg) + AMP + diphosphate. This Malacoplasma penetrans (strain HF-2) (Mycoplasma penetrans) protein is Arginine--tRNA ligase.